Here is a 610-residue protein sequence, read N- to C-terminus: UvrABC system protein C (610 aa).

A GIY-YIG domain is found at 16–94 (HQPGVYRMYN…IKQYLPKYNV (79 aa)). One can recognise a UVR domain in the interval 204-239 (NQVLELLVQKMEIASQQLKFEDAAKFRDQIQAIRRV).

This sequence belongs to the UvrC family. Interacts with UvrB in an incision complex.

It localises to the cytoplasm. Its function is as follows. The UvrABC repair system catalyzes the recognition and processing of DNA lesions. UvrC both incises the 5' and 3' sides of the lesion. The N-terminal half is responsible for the 3' incision and the C-terminal half is responsible for the 5' incision. This is UvrABC system protein C from Vibrio vulnificus (strain CMCP6).